A 543-amino-acid chain; its full sequence is MTNYIFVTGGVVSSLGKGIAAASLAAILEARGLTVTMLKLDPYINVDPGTMSPIQHGEVFVTDDGAETDLDLGHYERFIRTRMTKRNNFTTGRVYEEVLKRERRGDYLGATIQVIPHITNEIKRRVIEGAEGHDVAIVEVGGTVGDIESQPFLEAIRQLGTEVGRERAMFMHLTLVPYMPASGEVKTKPTQHSVKELRSIGIQPDILVCRSVGALPASERSKIALFTNVADKAVISLKDVDSIYRIPAALKAQGMDQLVVDRFGLECNEADLSEWEQVLYAESNPTAEVNIGMIGKYVELPDAYKSVNEALKHAGLKNRLTVNIHHIDSQDVESKGTQILEQLDAILVPGGFGERGIEGKIAAARYARENKVPYLGICLGMQVALIEYARNVAGMEKANSTEFDPETPYPVVGLITEWLDAAGTTEVRTETSDLGGTMRLGSQLCHLIEGTKVHEMYGNAEIYERHRHRYEVNNNLRDQIEAAGLKVSGLSTDKRLVEVVEIPDHPWFIAGQFHPEFTSTPRDGHPLFTGFVAAAGKYQKENH.

Residues 1–265 are amidoligase domain; it reads MTNYIFVTGG…DQLVVDRFGL (265 aa). CTP is bound at residue Ser-13. UTP is bound at residue Ser-13. ATP is bound by residues 14–19 and Asp-71; that span reads SLGKGI. 2 residues coordinate Mg(2+): Asp-71 and Glu-139. CTP-binding positions include 146–148, 186–191, and Lys-222; these read DIE and KTKPTQ. UTP contacts are provided by residues 186 to 191 and Lys-222; that span reads KTKPTQ. 238-240 is an ATP binding site; sequence KDV. In terms of domain architecture, Glutamine amidotransferase type-1 spans 290–541; the sequence is NIGMIGKYVE…VAAAGKYQKE (252 aa). L-glutamine is bound at residue Gly-351. Cys-378 acts as the Nucleophile; for glutamine hydrolysis in catalysis. Residues 379-382, Glu-402, and Arg-469 each bind L-glutamine; that span reads LGMQ. Residues His-514 and Glu-516 contribute to the active site.

It belongs to the CTP synthase family. In terms of assembly, homotetramer.

It carries out the reaction UTP + L-glutamine + ATP + H2O = CTP + L-glutamate + ADP + phosphate + 2 H(+). The catalysed reaction is L-glutamine + H2O = L-glutamate + NH4(+). It catalyses the reaction UTP + NH4(+) + ATP = CTP + ADP + phosphate + 2 H(+). It participates in pyrimidine metabolism; CTP biosynthesis via de novo pathway; CTP from UDP: step 2/2. With respect to regulation, allosterically activated by GTP, when glutamine is the substrate; GTP has no effect on the reaction when ammonia is the substrate. The allosteric effector GTP functions by stabilizing the protein conformation that binds the tetrahedral intermediate(s) formed during glutamine hydrolysis. Inhibited by the product CTP, via allosteric rather than competitive inhibition. In terms of biological role, catalyzes the ATP-dependent amination of UTP to CTP with either L-glutamine or ammonia as the source of nitrogen. Regulates intracellular CTP levels through interactions with the four ribonucleotide triphosphates. The sequence is that of CTP synthase from Alteromonas mediterranea (strain DSM 17117 / CIP 110805 / LMG 28347 / Deep ecotype).